The sequence spans 343 residues: Polyprenal reductase 2 (343 aa).

6 helical membrane passes run 12 to 32, 66 to 86, 164 to 184, 223 to 243, 266 to 286, and 291 to 311; these read GAWI…SIPT, FAHF…ATWM, MHIL…LSLC, PLMK…WGWI, IIPY…AEIV, and LLIA…FVAA.

The protein belongs to the steroid 5-alpha reductase family. Polyprenal reductase subfamily. Expressed in roots, leaves, stems and flowers.

The protein resides in the endoplasmic reticulum membrane. It carries out the reaction a di-trans,poly-cis-dolichal + NADP(+) = a di-trans,poly-cis-polyprenal + NADPH + H(+). Its pathway is protein modification; protein glycosylation. Plays a key role in early steps of protein N-linked glycosylation by being involved in the conversion of polyprenol into dolichol. Acts as a polyprenal reductase that mediates the reduction of polyprenal into dolichal in a NADP-dependent mechanism. Dolichols are required for the synthesis of dolichol-linked monosaccharides and the oligosaccharide precursor used for N-glycosylation. Involved in the regulation of plant growth and reproductive processes. This Arabidopsis thaliana (Mouse-ear cress) protein is Polyprenal reductase 2.